A 132-amino-acid polypeptide reads, in one-letter code: Small ribosomal subunit protein uS8 (132 aa).

The protein belongs to the universal ribosomal protein uS8 family. Part of the 30S ribosomal subunit. Contacts proteins S5 and S12.

Functionally, one of the primary rRNA binding proteins, it binds directly to 16S rRNA central domain where it helps coordinate assembly of the platform of the 30S subunit. This is Small ribosomal subunit protein uS8 (rpsH) from Caldanaerobacter subterraneus subsp. tengcongensis (strain DSM 15242 / JCM 11007 / NBRC 100824 / MB4) (Thermoanaerobacter tengcongensis).